A 54-amino-acid chain; its full sequence is UPF0391 membrane protein R00741 (54 aa).

2 helical membrane-spanning segments follow: residues 5–25 (ALVF…GIAG) and 30–50 (IAQV…VAGL).

The protein belongs to the UPF0391 family.

The protein localises to the cell membrane. The polypeptide is UPF0391 membrane protein R00741 (Rhizobium meliloti (strain 1021) (Ensifer meliloti)).